Reading from the N-terminus, the 424-residue chain is Dihydrolipoyllysine-residue succinyltransferase component of 2-oxoglutarate dehydrogenase complex (424 aa).

One can recognise a Lipoyl-binding domain in the interval 1–76 (MPEVKVPELA…EVGQAIAVVG (76 aa)). Lysine 42 carries the post-translational modification N6-lipoyllysine. Disordered regions lie at residues 76-138 (GEGS…KYAR) and 155-204 (VRKE…RKKT). Residues 91-105 (EAPKQETETSTDDKS) show a composition bias toward basic and acidic residues. Residues 122–131 (DNNQRVNATP) show a composition bias toward polar residues. Residues 128–164 (NATPSARKYAREKGIDLSEIAAASNDVVRKEHVDQSQ) enclose the Peripheral subunit-binding (PSBD) domain. Positions 162 to 176 (QSQTQTSTQQQAQPA) are enriched in low complexity. Residues histidine 395 and aspartate 399 contribute to the active site.

The protein belongs to the 2-oxoacid dehydrogenase family. As to quaternary structure, forms a 24-polypeptide structural core with octahedral symmetry. Part of the 2-oxoglutarate dehydrogenase (OGDH) complex composed of E1 (2-oxoglutarate dehydrogenase), E2 (dihydrolipoamide succinyltransferase) and E3 (dihydrolipoamide dehydrogenase); the complex contains multiple copies of the three enzymatic components (E1, E2 and E3). Requires (R)-lipoate as cofactor.

The catalysed reaction is N(6)-[(R)-dihydrolipoyl]-L-lysyl-[protein] + succinyl-CoA = N(6)-[(R)-S(8)-succinyldihydrolipoyl]-L-lysyl-[protein] + CoA. Its pathway is amino-acid degradation; L-lysine degradation via saccharopine pathway; glutaryl-CoA from L-lysine: step 6/6. Functionally, E2 component of the 2-oxoglutarate dehydrogenase (OGDH) complex which catalyzes the second step in the conversion of 2-oxoglutarate to succinyl-CoA and CO(2). The polypeptide is Dihydrolipoyllysine-residue succinyltransferase component of 2-oxoglutarate dehydrogenase complex (odhB) (Staphylococcus saprophyticus subsp. saprophyticus (strain ATCC 15305 / DSM 20229 / NCIMB 8711 / NCTC 7292 / S-41)).